The sequence spans 145 residues: 3-hydroxyacyl-[acyl-carrier-protein] dehydratase FabZ (145 aa).

The active site involves His-49.

This sequence belongs to the thioester dehydratase family. FabZ subfamily.

Its subcellular location is the cytoplasm. It catalyses the reaction a (3R)-hydroxyacyl-[ACP] = a (2E)-enoyl-[ACP] + H2O. Its function is as follows. Involved in unsaturated fatty acids biosynthesis. Catalyzes the dehydration of short chain beta-hydroxyacyl-ACPs and long chain saturated and unsaturated beta-hydroxyacyl-ACPs. This Rickettsia felis (strain ATCC VR-1525 / URRWXCal2) (Rickettsia azadi) protein is 3-hydroxyacyl-[acyl-carrier-protein] dehydratase FabZ.